The following is a 317-amino-acid chain: tRNA-cytidine(32) 2-sulfurtransferase (317 aa).

Positions 63-68 match the PP-loop motif motif; that stretch reads SGGKDS. 3 residues coordinate [4Fe-4S] cluster: Cys-138, Cys-141, and Cys-229.

This sequence belongs to the TtcA family. In terms of assembly, homodimer. Mg(2+) serves as cofactor. It depends on [4Fe-4S] cluster as a cofactor.

The protein resides in the cytoplasm. It catalyses the reaction cytidine(32) in tRNA + S-sulfanyl-L-cysteinyl-[cysteine desulfurase] + AH2 + ATP = 2-thiocytidine(32) in tRNA + L-cysteinyl-[cysteine desulfurase] + A + AMP + diphosphate + H(+). Its pathway is tRNA modification. Its function is as follows. Catalyzes the ATP-dependent 2-thiolation of cytidine in position 32 of tRNA, to form 2-thiocytidine (s(2)C32). The sulfur atoms are provided by the cysteine/cysteine desulfurase (IscS) system. The protein is tRNA-cytidine(32) 2-sulfurtransferase of Janthinobacterium sp. (strain Marseille) (Minibacterium massiliensis).